A 701-amino-acid chain; its full sequence is Epithelial splicing regulatory protein 2 (701 aa).

RRM domains follow at residues threonine 226 to glycine 303, valine 327 to alanine 407, and cysteine 448 to phenylalanine 523.

Belongs to the ESRP family.

It localises to the nucleus. MRNA splicing factor that regulates the formation of epithelial cell-specific isoforms. Specifically regulates the expression of FGFR2-IIIb, an epithelial cell-specific isoform of FGFR2. Acts by directly binding specific sequences in mRNAs. Binds the GU-rich sequence motifs in the ISE/ISS-3, a cis-element regulatory region present in the mRNA of FGFR2. The sequence is that of Epithelial splicing regulatory protein 2 (ESRP2) from Gallus gallus (Chicken).